A 97-amino-acid polypeptide reads, in one-letter code: Ferredoxin-like protein (97 aa).

Residues 56–86 (GQVEVIADGCMECGTCRVLCEESGDIDWSYP) form the 4Fe-4S ferredoxin-type domain.

This sequence to ferredoxins from P.putida and C.tartarivorum, ferredoxin I from A.vinelandii, ferredoxin II from D.desulfuricans.

Could be a 3Fe-4S cluster-containing protein. The polypeptide is Ferredoxin-like protein (fixX) (Sinorhizobium fredii (strain NBRC 101917 / NGR234)).